The chain runs to 437 residues: GTPase Obg (437 aa).

The region spanning Ser2 to Leu160 is the Obg domain. An OBG-type G domain is found at Ala161 to Ala338. Residues Gly167–Ser174, Phe192–Val196, Asp214–Gly217, Asn284–Asp287, and Ser319–Leu321 each bind GTP. Positions 174 and 194 each coordinate Mg(2+). One can recognise an OCT domain in the interval Gly359–Asp437.

Belongs to the TRAFAC class OBG-HflX-like GTPase superfamily. OBG GTPase family. As to quaternary structure, monomer. It depends on Mg(2+) as a cofactor.

It localises to the cytoplasm. Its function is as follows. An essential GTPase which binds GTP, GDP and possibly (p)ppGpp with moderate affinity, with high nucleotide exchange rates and a fairly low GTP hydrolysis rate. Plays a role in control of the cell cycle, stress response, ribosome biogenesis and in those bacteria that undergo differentiation, in morphogenesis control. This chain is GTPase Obg, found in Streptococcus equi subsp. equi (strain 4047).